Consider the following 508-residue polypeptide: Lysine-specific permease LysP (508 aa).

12 consecutive transmembrane segments (helical) span residues serine 43 to isoleucine 63, alanine 66 to methionine 86, proline 112 to valine 132, tryptophan 144 to isoleucine 164, isoleucine 184 to glycine 204, phenylalanine 219 to alanine 239, isoleucine 270 to proline 290, valine 314 to alanine 334, isoleucine 367 to isoleucine 387, phenylalanine 393 to isoleucine 413, alanine 436 to glycine 456, and tryptophan 467 to tyrosine 487.

It belongs to the amino acid-polyamine-organocation (APC) superfamily. Amino acid transporter (AAT) (TC 2.A.3.1) family.

The protein localises to the cell membrane. It carries out the reaction L-lysine(out) + H(+)(out) = L-lysine(in) + H(+)(in). Functionally, permease involved in lysine uptake. This chain is Lysine-specific permease LysP, found in Lactococcus lactis subsp. cremoris (strain MG1363).